The sequence spans 179 residues: Putative ankyrin repeat protein RF_0922 (179 aa).

5 ANK repeats span residues 5–34, 40–72, 75–104, 110–139, and 145–174; these read KGCTALTWAVDKGLEKVCEILIPNMSEQAI, NGSTALTLAAWKGLEKICRLLIPKMSPQAINHV, NGNTALTLAAWKGLEKICELLIPKMSSQAI, NGDTALTLAAWKGLEKICEMLIPKMSEQAI, and NGNTALTLAADKSLEKICEMLIPKMSKQAI.

This is Putative ankyrin repeat protein RF_0922 from Rickettsia felis (strain ATCC VR-1525 / URRWXCal2) (Rickettsia azadi).